Reading from the N-terminus, the 189-residue chain is Insecticyanin-A (189 aa).

2 disulfides stabilise this stretch: Cys9-Cys119 and Cys43-Cys175.

It belongs to the calycin superfamily. Lipocalin family. Homotetramer. As to expression, synthesized only in the caterpillars, apparently by the epidermis and secreted into the hemolymph. The protein is passed over from the larval hemolymph to that of pupae and adults and is sequestered in the eggs.

It is found in the secreted. In terms of biological role, this protein binds a chromophore: biliverdin IX, isomer gamma. Mixed with lipoprotein-bound carotenes, this blue protein provides hornworms with their green cryptic coloration which serves a camouflage. The protein is Insecticyanin-A (INSA) of Manduca sexta (Tobacco hawkmoth).